The chain runs to 237 residues: Endonuclease V (237 aa).

2 residues coordinate Mg(2+): Asp-46 and Asp-114.

This sequence belongs to the endonuclease V family. Mg(2+) is required as a cofactor.

The protein resides in the cytoplasm. It catalyses the reaction Endonucleolytic cleavage at apurinic or apyrimidinic sites to products with a 5'-phosphate.. Functionally, DNA repair enzyme involved in the repair of deaminated bases. Selectively cleaves double-stranded DNA at the second phosphodiester bond 3' to a deoxyinosine leaving behind the intact lesion on the nicked DNA. In Xanthomonas oryzae pv. oryzae (strain PXO99A), this protein is Endonuclease V.